A 396-amino-acid polypeptide reads, in one-letter code: Gamma-D-glutamyl-L-diamino acid endopeptidase 1 (396 aa).

LysM domains are found at residues 1–45 (MDIL…RIQI) and 51–95 (TSYT…TIQV). Residues 108–394 (QNYDYSMMMN…EALGIFLAGL (287 aa)) form the Peptidase M14 domain. Residues His-162 and Glu-165 each contribute to the Zn(2+) site. Asp-255 contributes to the substrate binding site. Position 307 (His-307) interacts with Zn(2+). Residue Tyr-347 is the Proton donor of the active site. Glu-366 serves as the catalytic Proton donor/acceptor.

This sequence belongs to the peptidase M14 family. Requires Zn(2+) as cofactor.

The catalysed reaction is Hydrolysis of gamma-D-glutamyl bonds to the L-terminus (position 7) of meso-diaminopimelic acid (meso-A2pm) in 7-(L-Ala-gamma-D-Glu)-meso-A2pm and 7-(L-Ala-gamma-D-Glu)-7-(D-Ala)-meso-A2pm. It is required that the D-terminal amino and carboxy groups of meso-A2pm are unsubstituted.. An endopeptidase which hydrolyzes the gamma-D-Glu-(L)meso-diaminopimelic acid bond of L-Ala-gamma-D-Glu-(L)meso-diaminopimelic acid and L-Ala-gamma-D-Glu-(L)meso-diaminopimelic acid(L)-D-Ala peptides. It is active on spore cortex peptidoglycan. This Lysinibacillus sphaericus (Bacillus sphaericus) protein is Gamma-D-glutamyl-L-diamino acid endopeptidase 1.